Here is a 489-residue protein sequence, read N- to C-terminus: Kynureninase 2 (489 aa).

The span at 1 to 12 (MDASAAISQLRQ) shows a compositional bias: polar residues. The interval 1-25 (MDASAAISQLRQGQKPEWPQNANTS) is disordered. Residues L149, T150, 177–180 (FPSD), D261, H264, and Y286 contribute to the pyridoxal 5'-phosphate site. K287 is subject to N6-(pyridoxal phosphate)lysine. Pyridoxal 5'-phosphate contacts are provided by W317 and N345.

Belongs to the kynureninase family. As to quaternary structure, homodimer. Requires pyridoxal 5'-phosphate as cofactor.

The protein localises to the cytoplasm. The catalysed reaction is L-kynurenine + H2O = anthranilate + L-alanine + H(+). It carries out the reaction 3-hydroxy-L-kynurenine + H2O = 3-hydroxyanthranilate + L-alanine + H(+). It participates in amino-acid degradation; L-kynurenine degradation; L-alanine and anthranilate from L-kynurenine: step 1/1. It functions in the pathway cofactor biosynthesis; NAD(+) biosynthesis; quinolinate from L-kynurenine: step 2/3. Functionally, catalyzes the cleavage of L-kynurenine (L-Kyn) and L-3-hydroxykynurenine (L-3OHKyn) into anthranilic acid (AA) and 3-hydroxyanthranilic acid (3-OHAA), respectively. The polypeptide is Kynureninase 2 (Phaeosphaeria nodorum (strain SN15 / ATCC MYA-4574 / FGSC 10173) (Glume blotch fungus)).